A 711-amino-acid polypeptide reads, in one-letter code: Polyribonucleotide nucleotidyltransferase (711 aa).

Mg(2+) is bound by residues Asp-490 and Asp-496. Residues 556 to 615 enclose the KH domain; it reads PRIETMQVPTDKIREVIGSGGKVIREIVEVSGAKVDINDDGVIKIASANGEAIQKAYDMI. An S1 motif domain is found at 625 to 693; it reads GAVYTGKVVK…DRGKVRLSMK (69 aa).

Belongs to the polyribonucleotide nucleotidyltransferase family. It depends on Mg(2+) as a cofactor.

The protein localises to the cytoplasm. The enzyme catalyses RNA(n+1) + phosphate = RNA(n) + a ribonucleoside 5'-diphosphate. Its function is as follows. Involved in mRNA degradation. Catalyzes the phosphorolysis of single-stranded polyribonucleotides processively in the 3'- to 5'-direction. The chain is Polyribonucleotide nucleotidyltransferase from Ruegeria sp. (strain TM1040) (Silicibacter sp.).